A 307-amino-acid polypeptide reads, in one-letter code: Isethionate sulfite-lyase activating enzyme (307 aa).

Residues 22 to 307 (HDGPGIRTVV…EAVVAQTADS (286 aa)) enclose the Radical SAM core domain. [4Fe-4S] cluster-binding residues include cysteine 36, cysteine 40, cysteine 43, cysteine 62, cysteine 68, cysteine 71, cysteine 75, cysteine 95, cysteine 98, cysteine 102, and cysteine 106. 42-44 (WCS) lines the S-adenosyl-L-methionine pocket. 2 consecutive 4Fe-4S ferredoxin-type domains span residues 53-85 (VELA…RAED) and 86-117 (DTIS…YGAH). S-adenosyl-L-methionine is bound by residues glycine 146, 195–197 (DIK), and histidine 268.

The protein belongs to the organic radical-activating enzymes family. Monomer. The cofactor is [4Fe-4S] cluster.

The enzyme catalyses glycyl-[protein] + reduced [flavodoxin] + S-adenosyl-L-methionine = glycin-2-yl radical-[protein] + semiquinone [flavodoxin] + 5'-deoxyadenosine + L-methionine + H(+). The protein operates within organosulfur degradation; alkanesulfonate degradation. Functionally, involved in an anaerobic respiration pathway that converts the sulfonate isethionate (2-hydroxyethanesulfonate) to ammonia, acetate and sulfide. Catalyzes activation of the isethionate sulfite-lyase IseG under anaerobic conditions by generation of an organic free radical on a glycine residue, via a homolytic cleavage of S-adenosyl-L-methionine (SAM). This is Isethionate sulfite-lyase activating enzyme from Nitratidesulfovibrio vulgaris (strain ATCC 29579 / DSM 644 / CCUG 34227 / NCIMB 8303 / VKM B-1760 / Hildenborough) (Desulfovibrio vulgaris).